Reading from the N-terminus, the 494-residue chain is Probable cytochrome P450 518A1 (494 aa).

The chain crosses the membrane as a helical span at residues 1 to 21; sequence MSILIILIISIIFYLIFDFLY. Cys438 lines the heme pocket.

Belongs to the cytochrome P450 family. Heme is required as a cofactor.

The protein resides in the membrane. In Dictyostelium discoideum (Social amoeba), this protein is Probable cytochrome P450 518A1 (cyp518A1).